Here is a 44-residue protein sequence, read N- to C-terminus: uncharacterized protein (44 aa).

The N-terminal stretch at M1 to A28 is a signal peptide.

This is an uncharacterized protein from Bacillus subtilis (strain 168).